Here is a 178-residue protein sequence, read N- to C-terminus: Large ribosomal subunit protein uL6 (178 aa).

It belongs to the universal ribosomal protein uL6 family. As to quaternary structure, part of the 50S ribosomal subunit.

Functionally, this protein binds to the 23S rRNA, and is important in its secondary structure. It is located near the subunit interface in the base of the L7/L12 stalk, and near the tRNA binding site of the peptidyltransferase center. The sequence is that of Large ribosomal subunit protein uL6 from Helicobacter acinonychis (strain Sheeba).